Reading from the N-terminus, the 141-residue chain is Nucleoside diphosphate kinase (141 aa).

6 residues coordinate ATP: Lys11, Phe59, Arg87, Thr93, Arg104, and Asn114. Residue His117 is the Pros-phosphohistidine intermediate of the active site.

Belongs to the NDK family. As to quaternary structure, homotetramer. Requires Mg(2+) as cofactor.

Its subcellular location is the cytoplasm. The enzyme catalyses a 2'-deoxyribonucleoside 5'-diphosphate + ATP = a 2'-deoxyribonucleoside 5'-triphosphate + ADP. The catalysed reaction is a ribonucleoside 5'-diphosphate + ATP = a ribonucleoside 5'-triphosphate + ADP. Its function is as follows. Major role in the synthesis of nucleoside triphosphates other than ATP. The ATP gamma phosphate is transferred to the NDP beta phosphate via a ping-pong mechanism, using a phosphorylated active-site intermediate. The sequence is that of Nucleoside diphosphate kinase from Cupriavidus metallidurans (strain ATCC 43123 / DSM 2839 / NBRC 102507 / CH34) (Ralstonia metallidurans).